A 440-amino-acid chain; its full sequence is 3-phosphoshikimate 1-carboxyvinyltransferase (440 aa).

Positions 29 and 34 each coordinate 3-phosphoshikimate. Residue Lys-29 coordinates phosphoenolpyruvate. Residues Gly-99 and Arg-128 each contribute to the phosphoenolpyruvate site. The 3-phosphoshikimate site is built by Ser-171, Ser-172, Gln-173, Ser-199, Asp-316, and Lys-343. Gln-173 serves as a coordination point for phosphoenolpyruvate. Asp-316 functions as the Proton acceptor in the catalytic mechanism. Residues Arg-347, Arg-390, and Lys-416 each contribute to the phosphoenolpyruvate site.

Belongs to the EPSP synthase family. Monomer.

The protein resides in the cytoplasm. The catalysed reaction is 3-phosphoshikimate + phosphoenolpyruvate = 5-O-(1-carboxyvinyl)-3-phosphoshikimate + phosphate. It functions in the pathway metabolic intermediate biosynthesis; chorismate biosynthesis; chorismate from D-erythrose 4-phosphate and phosphoenolpyruvate: step 6/7. Functionally, catalyzes the transfer of the enolpyruvyl moiety of phosphoenolpyruvate (PEP) to the 5-hydroxyl of shikimate-3-phosphate (S3P) to produce enolpyruvyl shikimate-3-phosphate and inorganic phosphate. The chain is 3-phosphoshikimate 1-carboxyvinyltransferase from Deinococcus geothermalis (strain DSM 11300 / CIP 105573 / AG-3a).